The chain runs to 122 residues: Small ribosomal subunit protein bS16 (122 aa).

A disordered region spans residues 85–122; it reads REAKNNPIKAKPGKRAQERAAEKAQKAADAAAAADAAE. The span at 99 to 110 shows a compositional bias: basic and acidic residues; the sequence is RAQERAAEKAQK. Positions 111–122 are enriched in low complexity; sequence AADAAAAADAAE.

This sequence belongs to the bacterial ribosomal protein bS16 family.

This is Small ribosomal subunit protein bS16 from Rhizobium etli (strain ATCC 51251 / DSM 11541 / JCM 21823 / NBRC 15573 / CFN 42).